Here is a 264-residue protein sequence, read N- to C-terminus: 3-methyl-2-oxobutanoate hydroxymethyltransferase (264 aa).

The Mg(2+) site is built by aspartate 45 and aspartate 84. 3-methyl-2-oxobutanoate is bound by residues aspartate 45–serine 46, aspartate 84, and lysine 113. A Mg(2+)-binding site is contributed by glutamate 115. The active-site Proton acceptor is the glutamate 182.

The protein belongs to the PanB family. In terms of assembly, homodecamer; pentamer of dimers. Mg(2+) is required as a cofactor.

It localises to the cytoplasm. The enzyme catalyses 3-methyl-2-oxobutanoate + (6R)-5,10-methylene-5,6,7,8-tetrahydrofolate + H2O = 2-dehydropantoate + (6S)-5,6,7,8-tetrahydrofolate. It functions in the pathway cofactor biosynthesis; (R)-pantothenate biosynthesis; (R)-pantoate from 3-methyl-2-oxobutanoate: step 1/2. In terms of biological role, catalyzes the reversible reaction in which hydroxymethyl group from 5,10-methylenetetrahydrofolate is transferred onto alpha-ketoisovalerate to form ketopantoate. The chain is 3-methyl-2-oxobutanoate hydroxymethyltransferase from Caldicellulosiruptor bescii (strain ATCC BAA-1888 / DSM 6725 / KCTC 15123 / Z-1320) (Anaerocellum thermophilum).